The following is a 130-amino-acid chain: Holo-[acyl-carrier-protein] synthase (130 aa).

Mg(2+) contacts are provided by aspartate 9 and glutamate 58.

Belongs to the P-Pant transferase superfamily. AcpS family. It depends on Mg(2+) as a cofactor.

The protein resides in the cytoplasm. The enzyme catalyses apo-[ACP] + CoA = holo-[ACP] + adenosine 3',5'-bisphosphate + H(+). Functionally, transfers the 4'-phosphopantetheine moiety from coenzyme A to a Ser of acyl-carrier-protein. This chain is Holo-[acyl-carrier-protein] synthase, found in Mycobacterium leprae (strain Br4923).